The chain runs to 287 residues: Shikimate kinase (287 aa).

Position 87–97 (87–97 (PLASGLKSSSA)) interacts with ATP.

It belongs to the GHMP kinase family. Archaeal shikimate kinase subfamily.

Its subcellular location is the cytoplasm. It carries out the reaction shikimate + ATP = 3-phosphoshikimate + ADP + H(+). It participates in metabolic intermediate biosynthesis; chorismate biosynthesis; chorismate from D-erythrose 4-phosphate and phosphoenolpyruvate: step 5/7. This Methanococcoides burtonii (strain DSM 6242 / NBRC 107633 / OCM 468 / ACE-M) protein is Shikimate kinase.